We begin with the raw amino-acid sequence, 340 residues long: Flavonoid 7-O-methyltransferase 2 (340 aa).

Residue Asp207 participates in S-adenosyl-L-methionine binding. His245 functions as the Proton acceptor in the catalytic mechanism.

The protein belongs to the class I-like SAM-binding methyltransferase superfamily. Cation-independent O-methyltransferase family. Homodimer. As to expression, expressed in leaves.

The catalysed reaction is scutellarein 4'-methyl ether + S-adenosyl-L-methionine = ladanein + S-adenosyl-L-homocysteine. The enzyme catalyses acacetin + S-adenosyl-L-methionine = apigenin 4',7-dimethyl ether + S-adenosyl-L-homocysteine. It carries out the reaction diosmetin + S-adenosyl-L-methionine = luteolin 4',7-dimethyl ether + S-adenosyl-L-homocysteine. It catalyses the reaction chrysoeriol + S-adenosyl-L-methionine = velutin + S-adenosyl-L-homocysteine. The catalysed reaction is (2S)-naringenin + S-adenosyl-L-methionine = (2S)-sakuranetin + S-adenosyl-L-homocysteine + H(+). The enzyme catalyses apigenin + S-adenosyl-L-methionine = genkwanin + S-adenosyl-L-homocysteine + H(+). It carries out the reaction luteolin + S-adenosyl-L-methionine = luteolin 7-methyl ether + S-adenosyl-L-homocysteine + H(+). It catalyses the reaction scutellarein + S-adenosyl-L-methionine = scutellarein 7-methyl ether + S-adenosyl-L-homocysteine. Its pathway is flavonoid metabolism. Its function is as follows. Flavonoid 7-O-methyltransferase involved in the biosynthesis of polymethoxylated flavonoids natural products such as nevadensin and salvigenin, aroma compounds which contribute to the flavor of sweet basil, and exhibit pharmacological activities such as anti-allergic, anti-oxidant, antibacterial, anti-proliferative, and anti-inflammatory effects. Catalyzes S-adenosylmethionine-dependent regioselective 7-O-methylation of flavonoids; active on various hydroxylated flavonoid substrates, including apigenin (API) and luteolin (LUT), and, with a lower efficiency, scutellarein (SCU), naringenin (NAR), chrysoeriol (CHRYS), diosmetin (DIOS), acacetin (ACA) and scutellarein-7-methyl ether (SCU7Me). This is Flavonoid 7-O-methyltransferase 2 from Ocimum basilicum (Sweet basil).